Here is a 255-residue protein sequence, read N- to C-terminus: 5'-nucleotidase SurE (255 aa).

A divalent metal cation contacts are provided by D11, D12, S43, and N99.

Belongs to the SurE nucleotidase family. The cofactor is a divalent metal cation.

The protein localises to the cytoplasm. The catalysed reaction is a ribonucleoside 5'-phosphate + H2O = a ribonucleoside + phosphate. Nucleotidase that shows phosphatase activity on nucleoside 5'-monophosphates. The sequence is that of 5'-nucleotidase SurE from Caldanaerobacter subterraneus subsp. tengcongensis (strain DSM 15242 / JCM 11007 / NBRC 100824 / MB4) (Thermoanaerobacter tengcongensis).